A 138-amino-acid chain; its full sequence is Large ribosomal subunit protein bL19 (138 aa).

It belongs to the bacterial ribosomal protein bL19 family.

Its function is as follows. This protein is located at the 30S-50S ribosomal subunit interface and may play a role in the structure and function of the aminoacyl-tRNA binding site. This is Large ribosomal subunit protein bL19 from Rickettsia typhi (strain ATCC VR-144 / Wilmington).